The primary structure comprises 284 residues: Nucleotide-binding protein VF_0384 (284 aa).

8 to 15 (GSSGAGKS) is an ATP binding site. 56 to 59 (DIRN) contacts GTP.

The protein belongs to the RapZ-like family.

Its function is as follows. Displays ATPase and GTPase activities. In Aliivibrio fischeri (strain ATCC 700601 / ES114) (Vibrio fischeri), this protein is Nucleotide-binding protein VF_0384.